Consider the following 273-residue polypeptide: (5R)-carbapenem-3-carboxylate synthase (273 aa).

Fe cation-binding residues include His-101 and Asp-103. Gly-104 is a binding site for substrate. Residue Thr-130 participates in 2-oxoglutarate binding. His-251 is a binding site for Fe cation. Residues Arg-253, Arg-263, and Arg-267 each contribute to the 2-oxoglutarate site.

It belongs to the TfdA dioxygenase family. Homohexamer. Dimer of trimers. It depends on Fe(2+) as a cofactor.

It localises to the cytoplasm. The enzyme catalyses (3S,5S)-carbapenam-3-caboxylate + 2-oxoglutarate + O2 = (5R)-carbapenem-3-carboxylate + succinate + CO2 + H2O. Its activity is regulated as follows. Inhibited by L-N-acetylproline and by D-N-acetylproline. Functionally, catalyzes the Fe(2+) and alpha-ketoglutarate-dependent conversion of (3S,5S)-carbapenam to (5R)-carbapenem, an essential step in carbapenem antibiotic biosynthesis. This is (5R)-carbapenem-3-carboxylate synthase (carC) from Pectobacterium carotovorum subsp. carotovorum (Erwinia carotovora subsp. carotovora).